The chain runs to 443 residues: UDP-N-acetylmuramate--L-alanine ligase (443 aa).

G110–S116 contributes to the ATP binding site.

Belongs to the MurCDEF family.

Its subcellular location is the cytoplasm. It carries out the reaction UDP-N-acetyl-alpha-D-muramate + L-alanine + ATP = UDP-N-acetyl-alpha-D-muramoyl-L-alanine + ADP + phosphate + H(+). It functions in the pathway cell wall biogenesis; peptidoglycan biosynthesis. Its function is as follows. Cell wall formation. The chain is UDP-N-acetylmuramate--L-alanine ligase from Streptococcus agalactiae serotype III (strain NEM316).